A 203-amino-acid chain; its full sequence is Urease accessory protein UreG (203 aa).

14-21 is a GTP binding site; the sequence is GPVGSGKT.

Belongs to the SIMIBI class G3E GTPase family. UreG subfamily. As to quaternary structure, homodimer. UreD, UreF and UreG form a complex that acts as a GTP-hydrolysis-dependent molecular chaperone, activating the urease apoprotein by helping to assemble the nickel containing metallocenter of UreC. The UreE protein probably delivers the nickel.

The protein localises to the cytoplasm. Its function is as follows. Facilitates the functional incorporation of the urease nickel metallocenter. This process requires GTP hydrolysis, probably effectuated by UreG. This is Urease accessory protein UreG from Sinorhizobium fredii (strain NBRC 101917 / NGR234).